The chain runs to 2517 residues: Protein capicua homolog (2517 aa).

Disordered stretches follow at residues 1–197 (MKPM…SGSY), 300–325 (LSPGPSSQPGLPGSLPQPPQPLHREP), 342–483 (PWEP…KYKK), 531–579 (EMEG…RGDS), 608–640 (SSRSGTPSFSPVSTQSPFSPAPSPSPSPLFGFR), and 658–767 (VRSR…FRAV). The segment covering 57-67 (EEAEEGEEEEA) has biased composition (acidic residues). Positions 91-101 (EDPKGDGEAGR) are enriched in basic and acidic residues. Low complexity-rich tracts occupy residues 158–167 (TSTRSSSTDT) and 300–313 (LSPGPSSQPGLPGS). The segment covering 396 to 405 (HCEEGEEKHP) has biased composition (basic and acidic residues). The segment covering 414-428 (LPLPPPQLLSPPPKS) has biased composition (pro residues). Residues 451–477 (GSRSSSVASLEKGTAPAARARTPLTAA) are compositionally biased toward low complexity. A compositionally biased stretch (polar residues) spans 608-619 (SSRSGTPSFSPV). Over residues 677-686 (DLGPHPPPPA) the composition is skewed to pro residues. Residues 698 to 707 (TFQTNLTFTV) show a composition bias toward polar residues. The span at 726-735 (GAPGAGGGGA) shows a compositional bias: gly residues. Phosphoserine occurs at positions 776 and 780. 7 disordered regions span residues 812-842 (IVRNPDVPLPSKFPGEVGTAGEVRAGGPGRG), 955-1110 (PSQP…DHIR), 1179-1220 (CNKD…APGV), 1235-1274 (SDTKAPGSSSCGAERLHTVGGPGSARPRAFSHSGVHSLDG), 1290-1347 (SGPA…TSDE), 1379-1539 (RVTD…ILQT), and 1595-1628 (IASKPFPTSGRAEASPNDTAGARTEMGTGSRVPG). Residues 937-955 (EPRSVAVFPWHSLVPFLAP) are interaction with ATXN1. Residues 959 to 981 (DPSVQPSEAQQPASHPVASNQSK) are compositionally biased toward polar residues. Serine 1055 and serine 1082 each carry phosphoserine. Basic and acidic residues-rich tracts occupy residues 1087-1110 (PKERDSSSEKDGRSPNKREKDHIR), 1179-1188 (CNKDRKKSSS), and 1200-1209 (GHKETRERSM). At arginine 1099 the chain carries Omega-N-methylarginine. The segment at residues 1109-1177 (IRRPMNAFMI…AHFKAHPDWK (69 aa)) is a DNA-binding region (HMG box). Residue serine 1186 is modified to Phosphoserine. The span at 1235–1245 (SDTKAPGSSSC) shows a compositional bias: polar residues. At serine 1271 the chain carries Phosphoserine. A compositionally biased stretch (low complexity) spans 1305-1323 (GAPGPFAAPGEGGALAATG). Phosphoserine is present on residues serine 1340, serine 1345, and serine 1405. A compositionally biased stretch (pro residues) spans 1418–1430 (PLDPEPPGPPDPP). Over residues 1439-1456 (SAPSSSASSPASSSASAA) the composition is skewed to low complexity. Residues 1457–1474 (TSFSLGSGTFKAQESGQG) show a composition bias toward polar residues. Serine 1609, serine 1630, and serine 1648 each carry phosphoserine. At arginine 1772 the chain carries Asymmetric dimethylarginine. The tract at residues 1799 to 1818 (QSVPSAPPPKAQSVSPVQAP) is disordered. Omega-N-methylarginine is present on arginine 1843. 3 disordered regions span residues 2039–2064 (AATILPKGPPAPATATPAPTSPFPSA), 2100–2342 (SFEA…AKCE), and 2430–2517 (AATP…ATGR). The span at 2051-2064 (ATATPAPTSPFPSA) shows a compositional bias: low complexity. Composition is skewed to pro residues over residues 2110-2119 (GPAPRQPLEP) and 2136-2145 (PTPPAPPPLP). The span at 2146-2155 (ETWTPTARSS) shows a compositional bias: low complexity. Lysine 2177 carries the post-translational modification N6-acetyllysine. A compositionally biased stretch (pro residues) spans 2198 to 2209 (PPTPPSPAPAPA). The residue at position 2200 (threonine 2200) is a Phosphothreonine. Serine 2203 is modified (phosphoserine). Positions 2210–2225 (VAPGGSSESSSGRAAG) are enriched in low complexity. Positions 2249 to 2278 (KTFDSVDNRVLSEVDFEERFAELPEFRPEE) are enriched in basic and acidic residues. Residues serine 2260, serine 2282, serine 2287, serine 2291, serine 2298, and serine 2306 each carry the phosphoserine modification. Phosphothreonine is present on threonine 2307. Serine 2311 and serine 2318 each carry phosphoserine. Pro residues predominate over residues 2457–2469 (APTPSPAGGPDPT). Serine 2504 carries the phosphoserine modification.

As to quaternary structure, found in a complex with ATXN1 and ATXN1L. In terms of assembly, interacts with ATXN1. In terms of tissue distribution, expressed in fetal brain.

The protein localises to the nucleus. In terms of biological role, transcriptional repressor which plays a role in development of the central nervous system (CNS). In concert with ATXN1 and ATXN1L, involved in brain development. In Homo sapiens (Human), this protein is Protein capicua homolog (CIC).